The following is a 797-amino-acid chain: Peroxisome proliferator-activated receptor gamma coactivator 1-alpha (797 aa).

Lys77 bears the N6-acetyllysine mark. Positions 101 to 138 (EDGLPSFDALTDGAVTTDNEASPSSMPDGTPPPQEAEE) are disordered. Residues 114–127 (AVTTDNEASPSSMP) are compositionally biased toward polar residues. Residues 142 to 146 (LKKLL) carry the LXXLL motif motif. Position 144 is an N6-acetyllysine (Lys144). Thr177 is modified (phosphothreonine; by AMPK). Position 183 is an N6-acetyllysine (Lys183). A disordered region spans residues 212–276 (YLTTNDDPPH…NDPKGSPFEN (65 aa)). The span at 218–236 (DPPHTKPTENRNSSRDKCA) shows a compositional bias: basic and acidic residues. Residues 243–259 (TQPQSQHAQAKPTTLSL) are compositionally biased toward polar residues. An N6-acetyllysine mark is found at Lys253, Lys270, Lys277, Lys320, Lys346, Lys412, Lys441, and Lys450. The tract at residues 289–376 (GTAGLTPPTT…HEERKTKRPS (88 aa)) is disordered. The interaction with PPARG stretch occupies residues 292–338 (GLTPPTTPPHKANQDNPFKASPKLKPSCKTVVPPPTKRARYSECSGT). Residues 349–797 (EQSELYAQLS…LKEAQRSLRR (449 aa)) form a mediates interaction with RNF34 region. Position 538 is a phosphoserine; by AMPK (Ser538). Disordered stretches follow at residues 543 to 598 (NSPC…SSRS), 612 to 634 (HRNSPLYVRSRSRSPYSRRPRYD), and 648 to 668 (EYRKEHEKRESERAKQRERQK). The span at 562–577 (QRMRSRSRSFSRHRSC) shows a compositional bias: basic residues. The segment covering 578-598 (SRSPYSRSRSRSPGSRSSSRS) has biased composition (low complexity). Basic residues predominate over residues 621–630 (SRSRSPYSRR). The region spanning 676 to 752 (RVIYVGKIRP…TDFELYFCGR (77 aa)) is the RRM domain. An N6-acetyllysine mark is found at Lys757 and Lys778.

Homooligomer. Interacts with MYBBP1A; inhibits MYBBP1A transcriptional activation. Interacts with PRDM16, LPIN1 and PML. Interacts (via LXXLL motif) with RORA and RORC (via AF-2 motif); activates RORA and RORC transcriptional activation. Interacts with LRPPRC. Interacts with FOXO1. Interacts with NR5A2. Phosphorylation by AMPK in skeletal muscle increases activation of its own promoter. Phosphorylated by CLK2. In terms of processing, heavily acetylated by KAT2A/GCN5 under conditions of high nutrients, leading to inactivation of PPARGC1A. Deacetylated by SIRT1 in low nutrients/high NAD conditions, leading to its activation. Post-translationally, ubiquitinated. Ubiquitination by RNF34 induces proteasomal degradation. White quadriceps and red tibialis anterior (TA) muscles, liver, kidney and brown adipose tissue (at protein level). Skeletal muscle, brown adipose tissue, heart, kidney and brain.

Its subcellular location is the nucleus. The protein localises to the PML body. Transcriptional coactivator for steroid receptors and nuclear receptors. Greatly increases the transcriptional activity of PPARG and thyroid hormone receptor on the uncoupling protein promoter. Can regulate key mitochondrial genes that contribute to the program of adaptive thermogenesis. Plays an essential role in metabolic reprogramming in response to dietary availability through coordination of the expression of a wide array of genes involved in glucose and fatty acid metabolism. Acts as a key regulator of gluconeogenesis: stimulates hepatic gluconeogenesis by increasing the expression of gluconeogenic enzymes, and acting together with FOXO1 to promote the fasting gluconeogenic program. Induces the expression of PERM1 in the skeletal muscle in an ESRRA-dependent manner. Also involved in the integration of the circadian rhythms and energy metabolism. Required for oscillatory expression of clock genes, such as BMAL1 and NR1D1, through the coactivation of RORA and RORC, and metabolic genes, such as PDK4 and PEPCK. This chain is Peroxisome proliferator-activated receptor gamma coactivator 1-alpha (Ppargc1a), found in Mus musculus (Mouse).